Reading from the N-terminus, the 920-residue chain is Anoctamin-4 (920 aa).

The Cytoplasmic segment spans residues 1-323 (METSSSGITN…LYFAWLGWYT (323 aa)). Positions 38–64 (KDDDSLLHPGNLTSTSDDASRLEAGGE) are disordered. The chain crosses the membrane as a helical span at residues 324 to 344 (GMLFPAAFIGLFVFLYGVITL). The Extracellular portion of the chain corresponds to 345-389 (DHCQVSKEVCQATDIIMCPVCDKYCPFMRLSDSCVYAKVTHLFDN). Residues 390 to 410 (GATVFFAVFMAVWATVFLEFW) form a helical membrane-spanning segment. The Cytoplasmic portion of the chain corresponds to 411–470 (KRRRAVIAYDWDLIDWEEEEEEIRPQFEAKYSKKERMNPISGKPEPYQAFADKCSRLIVS). A helical membrane pass occupies residues 471-491 (ASGIFFMICVVIAAVFGIVIY). Residues 492–512 (RVVTVSTFAAFKWALIRNNSQ) lie on the Extracellular side of the membrane. A glycan (N-linked (GlcNAc...) asparagine) is linked at Asn509. The chain crosses the membrane as a helical span at residues 513 to 533 (VATTGTAVCINFCIIMLLNVL). The Cytoplasmic segment spans residues 534–560 (YEKVALLLTNLEQPRTESEWENSFTLK). A helical transmembrane segment spans residues 561 to 581 (MFLFQFVNLNSSTFYIAFFLG). At 582 to 680 (RFTGHPGAYL…AYGLFDEYLE (99 aa)) the chain is on the extracellular side. Residues 681–701 (MILQFGFTTIFVAAFPLAPLL) form a helical membrane-spanning segment. Over 702–733 (ALLNNIIEIRLDAYKFVTQWRRPLASRAKDIG) the chain is Cytoplasmic. A helical transmembrane segment spans residues 734 to 754 (IWYGILEGIGILSVITNAFVI). Topologically, residues 755-850 (AITSDFIPRL…QFWHVLAARL (96 aa)) are extracellular. Asn789 and Asn802 each carry an N-linked (GlcNAc...) asparagine glycan. The helical transmembrane segment at 851–871 (AFIIVFEHLVFCIKHLISYLI) threads the bilayer. At 872–920 (PDLPKDLRDRMRREKYLIQEMMYEAELERLQKERKERKKNGKAHHNEWP) the chain is on the cytoplasmic side.

It belongs to the anoctamin family.

The protein resides in the cell membrane. The enzyme catalyses a 1,2-diacyl-sn-glycero-3-phospho-L-serine(in) = a 1,2-diacyl-sn-glycero-3-phospho-L-serine(out). The catalysed reaction is a beta-D-galactosyl-(1&lt;-&gt;1')-N-acylsphing-4-enine(out) = a beta-D-galactosyl-(1&lt;-&gt;1')-N-acylsphing-4-enine(in). It catalyses the reaction a 1,2-diacyl-sn-glycero-3-phosphocholine(in) = a 1,2-diacyl-sn-glycero-3-phosphocholine(out). Functionally, has calcium-dependent phospholipid scramblase activity; scrambles phosphatidylserine, phosphatidylcholine and galactosylceramide. Does not exhibit calcium-activated chloride channel (CaCC) activity. The polypeptide is Anoctamin-4 (Bos taurus (Bovine)).